The chain runs to 543 residues: Carboxypeptidase Y homolog A (543 aa).

The first 17 residues, 1–17 (MKFLTTGLLATAALAAA), serve as a signal peptide directing secretion. Residues 18–124 (QEQHVLQAED…KLHNYDLRVK (107 aa)) constitute a propeptide that is removed on maturation. Cystine bridges form between Cys-179/Cys-419, Cys-313/Cys-327, Cys-337/Cys-360, Cys-344/Cys-353, and Cys-382/Cys-389. Residue Asn-210 is glycosylated (N-linked (GlcNAc...) asparagine). Ser-266 is an active-site residue. Asp-458 is an active-site residue. Residue Asn-509 is glycosylated (N-linked (GlcNAc...) asparagine). His-520 is a catalytic residue.

Belongs to the peptidase S10 family.

It localises to the vacuole. It catalyses the reaction Release of a C-terminal amino acid with broad specificity.. In terms of biological role, vacuolar carboxypeptidase involved in degradation of small peptides. Digests preferentially peptides containing an aliphatic or hydrophobic residue in P1' position, as well as methionine, leucine or phenylalanine in P1 position of ester substrate. This is Carboxypeptidase Y homolog A (cpyA) from Trichophyton verrucosum (strain HKI 0517).